Consider the following 98-residue polypeptide: NADH-ubiquinone oxidoreductase chain 4L (98 aa).

A run of 3 helical transmembrane segments spans residues 1–21 (MLSI…GVLI), 29–49 (TLLC…LLIT), and 59–79 (TPLI…ALLV).

The protein belongs to the complex I subunit 4L family. Core subunit of respiratory chain NADH dehydrogenase (Complex I) which is composed of 45 different subunits.

It localises to the mitochondrion inner membrane. It carries out the reaction a ubiquinone + NADH + 5 H(+)(in) = a ubiquinol + NAD(+) + 4 H(+)(out). Its function is as follows. Core subunit of the mitochondrial membrane respiratory chain NADH dehydrogenase (Complex I) which catalyzes electron transfer from NADH through the respiratory chain, using ubiquinone as an electron acceptor. Part of the enzyme membrane arm which is embedded in the lipid bilayer and involved in proton translocation. This chain is NADH-ubiquinone oxidoreductase chain 4L (MT-ND4L), found in Sminthopsis crassicaudata (Fat-tailed dunnart).